The following is a 122-amino-acid chain: Large ribosomal subunit protein uL14 (122 aa).

Belongs to the universal ribosomal protein uL14 family. Part of the 50S ribosomal subunit. Forms a cluster with proteins L3 and L19. In the 70S ribosome, L14 and L19 interact and together make contacts with the 16S rRNA in bridges B5 and B8.

Binds to 23S rRNA. Forms part of two intersubunit bridges in the 70S ribosome. This is Large ribosomal subunit protein uL14 from Thermotoga petrophila (strain ATCC BAA-488 / DSM 13995 / JCM 10881 / RKU-1).